Consider the following 224-residue polypeptide: Octanoyltransferase (224 aa).

The BPL/LPL catalytic domain maps to 38–213 (AETTDEVWLL…QFVRAAGFQS (176 aa)). Residues 77–84 (RGGQVTYH), 144–146 (SLG), and 157–159 (GLA) contribute to the substrate site. Catalysis depends on Cys175, which acts as the Acyl-thioester intermediate.

It belongs to the LipB family.

It is found in the cytoplasm. The catalysed reaction is octanoyl-[ACP] + L-lysyl-[protein] = N(6)-octanoyl-L-lysyl-[protein] + holo-[ACP] + H(+). It participates in protein modification; protein lipoylation via endogenous pathway; protein N(6)-(lipoyl)lysine from octanoyl-[acyl-carrier-protein]: step 1/2. Its function is as follows. Catalyzes the transfer of endogenously produced octanoic acid from octanoyl-acyl-carrier-protein onto the lipoyl domains of lipoate-dependent enzymes. Lipoyl-ACP can also act as a substrate although octanoyl-ACP is likely to be the physiological substrate. The chain is Octanoyltransferase from Hahella chejuensis (strain KCTC 2396).